Here is a 239-residue protein sequence, read N- to C-terminus: Small ribosomal subunit protein uS3 (239 aa).

Residues 39-107 form the KH type-2 domain; sequence VRQVLRKKMS…SVHINVIEVR (69 aa). Residues 214 to 239 form a disordered region; sequence GQEKQDDGSRGDRNADRSSRRSREVR. Basic and acidic residues predominate over residues 216–239; that stretch reads EKQDDGSRGDRNADRSSRRSREVR.

The protein belongs to the universal ribosomal protein uS3 family. Part of the 30S ribosomal subunit. Forms a tight complex with proteins S10 and S14.

Its function is as follows. Binds the lower part of the 30S subunit head. Binds mRNA in the 70S ribosome, positioning it for translation. This is Small ribosomal subunit protein uS3 from Xylella fastidiosa (strain M12).